A 451-amino-acid chain; its full sequence is Mannan endo-1,6-alpha-mannosidase DFG5 (451 aa).

An N-terminal signal peptide occupies residues 1 to 21 (MVSLQQLTISILLLFTASVQS). N86, N111, N135, N203, N243, N268, and N402 each carry an N-linked (GlcNAc...) asparagine glycan. The GPI-anchor amidated alanine moiety is linked to residue A429. The propeptide at 430 to 451 (GAGVLTAIVLAVILGGAIWMIF) is removed in mature form.

Belongs to the glycosyl hydrolase 76 family. In terms of processing, the GPI-anchor is attached to the protein in the endoplasmic reticulum and serves to target the protein to the cell surface. There, the glucosamine-inositol phospholipid moiety is cleaved off and the GPI-modified mannoprotein is covalently attached via its lipidless GPI glycan remnant to the 1,6-beta-glucan of the outer cell wall layer. Post-translationally, N-mannosylated.

It is found in the secreted. Its subcellular location is the cell wall. The protein resides in the cell membrane. It catalyses the reaction Random hydrolysis of (1-&gt;6)-alpha-D-mannosidic linkages in unbranched (1-&gt;6)-mannans.. Required for normal synthesis of the cell wall and alkaline pH-induced hypha formation. This is Mannan endo-1,6-alpha-mannosidase DFG5 (DFG5) from Candida albicans (strain SC5314 / ATCC MYA-2876) (Yeast).